We begin with the raw amino-acid sequence, 178 residues long: ATP synthase subunit delta (178 aa).

The protein belongs to the ATPase delta chain family. As to quaternary structure, F-type ATPases have 2 components, F(1) - the catalytic core - and F(0) - the membrane proton channel. F(1) has five subunits: alpha(3), beta(3), gamma(1), delta(1), epsilon(1). F(0) has three main subunits: a(1), b(2) and c(10-14). The alpha and beta chains form an alternating ring which encloses part of the gamma chain. F(1) is attached to F(0) by a central stalk formed by the gamma and epsilon chains, while a peripheral stalk is formed by the delta and b chains.

The protein localises to the cell membrane. In terms of biological role, f(1)F(0) ATP synthase produces ATP from ADP in the presence of a proton or sodium gradient. F-type ATPases consist of two structural domains, F(1) containing the extramembraneous catalytic core and F(0) containing the membrane proton channel, linked together by a central stalk and a peripheral stalk. During catalysis, ATP synthesis in the catalytic domain of F(1) is coupled via a rotary mechanism of the central stalk subunits to proton translocation. Its function is as follows. This protein is part of the stalk that links CF(0) to CF(1). It either transmits conformational changes from CF(0) to CF(1) or is implicated in proton conduction. The chain is ATP synthase subunit delta from Geobacillus sp. (strain WCH70).